A 406-amino-acid polypeptide reads, in one-letter code: MRALIDMYQRIGLVPLIIVGLVLGILIGWLMPSVGVALGLLGSLFVGALKAVAPILVFILVMAAISQHQGESQVHVRPVLIMYIFGTFLAALTAVVASFAFPTELLGLNTIEAVADQAPPSGLKEVLTTLLMNLVDNPVNAIANANYMGILAWALIIGLALRKASATTRTMVSDLSEAISNVVRFVIAFAPIGILGLVANTIAETGFSALMSYGRLLTILVGCMLFIALVVNPIIVAFNIRRNPYPLVFTCLRESGITAFFTRSSAANIPVNMNLAKKLGLHEDTYSVTLPLGATINMAGAAITINVLTLAAAHTLGVPVDFGSALLLSVVATVAACGASGVAGGSLLLIPLACSLFNIPNDIAMQVVAIGFIIGVVQDSAETALNSSTDVLFTAAADPIMKNKTA.

The next 9 membrane-spanning stretches (helical) occupy residues 11-31 (IGLV…GWLM), 45-65 (FVGA…MAAI), 79-99 (VLIM…VASF), 141-161 (AIAN…GLAL), 185-205 (FVIA…IAET), 216-236 (LLTI…PIIV), 298-318 (MAGA…TLGV), 330-350 (VVAT…LLLI), and 357-377 (FNIP…IGVV).

Belongs to the dicarboxylate/amino acid:cation symporter (DAACS) (TC 2.A.23) family.

Its subcellular location is the cell inner membrane. It carries out the reaction L-serine(in) + Na(+)(in) = L-serine(out) + Na(+)(out). It catalyses the reaction L-threonine(in) + Na(+)(in) = L-threonine(out) + Na(+)(out). Involved in the import of serine and threonine into the cell, with the concomitant import of sodium (symport system). The polypeptide is Serine/threonine transporter SstT (Psychrobacter sp. (strain PRwf-1)).